Reading from the N-terminus, the 196-residue chain is Putative archaetidylserine decarboxylase proenzyme (196 aa).

The active-site Schiff-base intermediate with substrate; via pyruvic acid is serine 164. Serine 164 bears the Pyruvic acid (Ser); by autocatalysis mark.

Belongs to the phosphatidylserine decarboxylase family. PSD-A subfamily. In terms of assembly, heterodimer of a large membrane-associated beta subunit and a small pyruvoyl-containing alpha subunit. Pyruvate is required as a cofactor. Post-translationally, is synthesized initially as an inactive proenzyme. Formation of the active enzyme involves a self-maturation process in which the active site pyruvoyl group is generated from an internal serine residue via an autocatalytic post-translational modification. Two non-identical subunits are generated from the proenzyme in this reaction, and the pyruvate is formed at the N-terminus of the alpha chain, which is derived from the carboxyl end of the proenzyme. The post-translation cleavage follows an unusual pathway, termed non-hydrolytic serinolysis, in which the side chain hydroxyl group of the serine supplies its oxygen atom to form the C-terminus of the beta chain, while the remainder of the serine residue undergoes an oxidative deamination to produce ammonia and the pyruvoyl prosthetic group on the alpha chain.

The protein localises to the cell membrane. It carries out the reaction archaetidylserine + H(+) = archaetidylethanolamine + CO2. Its function is as follows. Catalyzes the formation of archaetidylethanolamine (PtdEtn) from archaetidylserine (PtdSer). In Halobacterium salinarum (strain ATCC 700922 / JCM 11081 / NRC-1) (Halobacterium halobium), this protein is Putative archaetidylserine decarboxylase proenzyme.